We begin with the raw amino-acid sequence, 1202 residues long: PAN2-PAN3 deadenylation complex catalytic subunit PAN2 (1202 aa).

WD repeat units follow at residues 153 to 193 (DENE…QKYA), 195 to 231 (ETPG…VEHE), 244 to 280 (VHGN…AITP), and 328 to 367 (PVGP…SFNP). The tract at residues 368–485 (YSRETEFALP…VGREEEPHLH (118 aa)) is linker. The USP domain occupies 486–924 (MVSKKYRKVT…VPAILYYVKR (439 aa)). Phosphoserine is present on S791. Residues 975-1147 (VGLDAEFVTL…EDARTALQLY (173 aa)) enclose the Exonuclease domain. The a divalent metal cation site is built by D978, E980, D1087, and D1139. S1189 is modified (phosphoserine).

Belongs to the peptidase C19 family. PAN2 subfamily. In terms of assembly, forms a heterotrimer with an asymmetric homodimer of the regulatory subunit PAN3 to form the poly(A)-nuclease (PAN) deadenylation complex. Interacts with PAN3 isoform 1/Pan3L and isoform 3/Pan3S. Interacts with ZFP36. A divalent metal cation serves as cofactor.

The protein resides in the cytoplasm. It is found in the P-body. The protein localises to the nucleus. The enzyme catalyses Exonucleolytic cleavage of poly(A) to 5'-AMP.. Positively regulated by the regulatory subunit PAN3. Functionally, catalytic subunit of the poly(A)-nuclease (PAN) deadenylation complex, one of two cytoplasmic mRNA deadenylases involved in general and miRNA-mediated mRNA turnover. PAN specifically shortens poly(A) tails of RNA and the activity is stimulated by poly(A)-binding protein (PABP). PAN deadenylation is followed by rapid degradation of the shortened mRNA tails by the CCR4-NOT complex. Deadenylated mRNAs are then degraded by two alternative mechanisms, namely exosome-mediated 3'-5' exonucleolytic degradation, or deadenylation-dependent mRNA decaping and subsequent 5'-3' exonucleolytic degradation by XRN1. Also acts as an important regulator of the HIF1A-mediated hypoxic response. Required for HIF1A mRNA stability independent of poly(A) tail length regulation. This Homo sapiens (Human) protein is PAN2-PAN3 deadenylation complex catalytic subunit PAN2.